Reading from the N-terminus, the 343-residue chain is Cytoplasmic tRNA 2-thiolation protein 1 (343 aa).

Belongs to the TtcA family. CTU1/NCS6/ATPBD3 subfamily.

It is found in the cytoplasm. It functions in the pathway tRNA modification; 5-methoxycarbonylmethyl-2-thiouridine-tRNA biosynthesis. Its function is as follows. Plays a central role in 2-thiolation of mcm(5)S(2)U at tRNA wobble positions of tRNA(Lys), tRNA(Glu) and tRNA(Gln). Directly binds tRNAs and probably acts by catalyzing adenylation of tRNAs, an intermediate required for 2-thiolation. It is unclear whether it acts as a sulfurtransferase that transfers sulfur from thiocarboxylated URM1 onto the uridine of tRNAs at wobble position. In Drosophila pseudoobscura pseudoobscura (Fruit fly), this protein is Cytoplasmic tRNA 2-thiolation protein 1.